A 473-amino-acid chain; its full sequence is Ribulose bisphosphate carboxylase large chain (473 aa).

Lysine 8 carries the N6,N6,N6-trimethyllysine modification. The substrate site is built by asparagine 117 and threonine 167. Lysine 169 functions as the Proton acceptor in the catalytic mechanism. Lysine 171 lines the substrate pocket. Mg(2+)-binding residues include lysine 195, aspartate 197, and glutamate 198. The residue at position 195 (lysine 195) is an N6-carboxylysine. The active-site Proton acceptor is the histidine 288. Positions 289, 321, and 373 each coordinate substrate.

The protein belongs to the RuBisCO large chain family. Type I subfamily. In terms of assembly, heterohexadecamer of 8 large chains and 8 small chains; disulfide-linked. The disulfide link is formed within the large subunit homodimers. Requires Mg(2+) as cofactor. The disulfide bond which can form in the large chain dimeric partners within the hexadecamer appears to be associated with oxidative stress and protein turnover.

It is found in the plastid. The protein localises to the chloroplast. It carries out the reaction 2 (2R)-3-phosphoglycerate + 2 H(+) = D-ribulose 1,5-bisphosphate + CO2 + H2O. The enzyme catalyses D-ribulose 1,5-bisphosphate + O2 = 2-phosphoglycolate + (2R)-3-phosphoglycerate + 2 H(+). In terms of biological role, ruBisCO catalyzes two reactions: the carboxylation of D-ribulose 1,5-bisphosphate, the primary event in carbon dioxide fixation, as well as the oxidative fragmentation of the pentose substrate in the photorespiration process. Both reactions occur simultaneously and in competition at the same active site. The protein is Ribulose bisphosphate carboxylase large chain of Amorphophallus titanum (Titan arum).